We begin with the raw amino-acid sequence, 207 residues long: Ribosomal RNA small subunit methyltransferase G (207 aa).

S-adenosyl-L-methionine contacts are provided by residues glycine 77, phenylalanine 82, glutamate 100 to serine 102, and arginine 141.

This sequence belongs to the methyltransferase superfamily. RNA methyltransferase RsmG family.

Its subcellular location is the cytoplasm. Specifically methylates the N7 position of a guanine in 16S rRNA. The polypeptide is Ribosomal RNA small subunit methyltransferase G (Borrelia hermsii (strain HS1 / DAH)).